The chain runs to 114 residues: Large ribosomal subunit protein uL22 (114 aa).

This sequence belongs to the universal ribosomal protein uL22 family. In terms of assembly, part of the 50S ribosomal subunit.

In terms of biological role, this protein binds specifically to 23S rRNA; its binding is stimulated by other ribosomal proteins, e.g. L4, L17, and L20. It is important during the early stages of 50S assembly. It makes multiple contacts with different domains of the 23S rRNA in the assembled 50S subunit and ribosome. Functionally, the globular domain of the protein is located near the polypeptide exit tunnel on the outside of the subunit, while an extended beta-hairpin is found that lines the wall of the exit tunnel in the center of the 70S ribosome. This Streptococcus agalactiae serotype Ia (strain ATCC 27591 / A909 / CDC SS700) protein is Large ribosomal subunit protein uL22.